Consider the following 90-residue polypeptide: uncharacterized protein (90 aa).

This is an uncharacterized protein from Mycobacterium tuberculosis (strain ATCC 25618 / H37Rv).